The following is a 213-amino-acid chain: ATP-dependent dethiobiotin synthetase BioD (213 aa).

13-18 contacts ATP; that stretch reads GIGKTV. Thr17 contacts Mg(2+). Lys33 is an active-site residue. A Mg(2+)-binding site is contributed by Glu100. ATP is bound by residues 100 to 103 and 184 to 186; these read EGAG and PRL.

The protein belongs to the dethiobiotin synthetase family. In terms of assembly, homodimer. It depends on Mg(2+) as a cofactor.

It is found in the cytoplasm. It carries out the reaction (7R,8S)-7,8-diammoniononanoate + CO2 + ATP = (4R,5S)-dethiobiotin + ADP + phosphate + 3 H(+). Its pathway is cofactor biosynthesis; biotin biosynthesis; biotin from 7,8-diaminononanoate: step 1/2. In terms of biological role, catalyzes a mechanistically unusual reaction, the ATP-dependent insertion of CO2 between the N7 and N8 nitrogen atoms of 7,8-diaminopelargonic acid (DAPA, also called 7,8-diammoniononanoate) to form a ureido ring. The chain is ATP-dependent dethiobiotin synthetase BioD from Rhodopseudomonas palustris (strain HaA2).